A 451-amino-acid chain; its full sequence is Chromosomal replication initiator protein DnaA (451 aa).

A domain I, interacts with DnaA modulators region spans residues 1-101; sequence MTENETIFWN…TSNHIFSRQT (101 aa). Positions 101–110 are domain II; the sequence is TINSLPAITS. A domain III, AAA+ region region spans residues 111–329; that stretch reads DLNPKYSFDN…GALKDISLVA (219 aa). Gly155, Gly157, Lys158, and Thr159 together coordinate ATP. The segment at 330-451 is domain IV, binds dsDNA; it reads NFKEIDKITV…EIETIKNKIK (122 aa).

Belongs to the DnaA family. In terms of assembly, oligomerizes as a right-handed, spiral filament on DNA at oriC.

Its subcellular location is the cytoplasm. Functionally, plays an essential role in the initiation and regulation of chromosomal replication. ATP-DnaA binds to the origin of replication (oriC) to initiate formation of the DNA replication initiation complex once per cell cycle. Binds the DnaA box (a 9 base pair repeat at the origin) and separates the double-stranded (ds)DNA. Forms a right-handed helical filament on oriC DNA; dsDNA binds to the exterior of the filament while single-stranded (ss)DNA is stabiized in the filament's interior. The ATP-DnaA-oriC complex binds and stabilizes one strand of the AT-rich DNA unwinding element (DUE), permitting loading of DNA polymerase. After initiation quickly degrades to an ADP-DnaA complex that is not apt for DNA replication. Binds acidic phospholipids. The polypeptide is Chromosomal replication initiator protein DnaA (Streptococcus uberis (strain ATCC BAA-854 / 0140J)).